The primary structure comprises 94 residues: Large ribosomal subunit protein uL23 (94 aa).

It belongs to the universal ribosomal protein uL23 family. In terms of assembly, part of the 50S ribosomal subunit. Contacts protein L29, and trigger factor when it is bound to the ribosome.

Functionally, one of the early assembly proteins it binds 23S rRNA. One of the proteins that surrounds the polypeptide exit tunnel on the outside of the ribosome. Forms the main docking site for trigger factor binding to the ribosome. The polypeptide is Large ribosomal subunit protein uL23 (Listeria monocytogenes serotype 4b (strain CLIP80459)).